The sequence spans 119 residues: Large ribosomal subunit protein uL24 (119 aa).

It belongs to the universal ribosomal protein uL24 family. Part of the 50S ribosomal subunit.

In terms of biological role, one of two assembly initiator proteins, it binds directly to the 5'-end of the 23S rRNA, where it nucleates assembly of the 50S subunit. Its function is as follows. Located at the polypeptide exit tunnel on the outside of the subunit. This is Large ribosomal subunit protein uL24 from Methanosarcina acetivorans (strain ATCC 35395 / DSM 2834 / JCM 12185 / C2A).